The following is a 232-amino-acid chain: Pseudaminic acid cytidylyltransferase (232 aa).

This sequence belongs to the CMP-NeuNAc synthase family. The cofactor is Mg(2+).

It carries out the reaction pseudaminate + CTP = CMP-pseudaminate + diphosphate. Its function is as follows. Catalyzes the final step in the biosynthesis of pseudaminic acid, a sialic-acid-like sugar that is used to modify flagellin. Mediates the activation of pseudaminic acid with CMP by forming CMP-pseudaminic acid. This Campylobacter jejuni subsp. jejuni serotype O:2 (strain ATCC 700819 / NCTC 11168) protein is Pseudaminic acid cytidylyltransferase (pseF).